A 1411-amino-acid chain; its full sequence is Protein ECM5 (1411 aa).

The JmjN domain occupies 118-159 (IPTFILAKKELPDPIKFYELVEDLGSVYGCVKLKIIPDADKF). The ARID domain occupies 185–279 (RTKIVDFYAK…ILLDFDIYEE (95 aa)). The tract at residues 285–312 (RNNEKNEDMVESEIFRHSNSRSRDEEEP) is disordered. One can recognise a JmjC domain in the interval 476–695 (KNILDQWNLD…FSSEAAKWTS (220 aa)). A PHD-type zinc finger spans residues 1238-1290 (TKYCFCRRVEEGTAMVECEICKEWYHVDCISNGELVPPDDPNVLFVCSICTPP).

The protein localises to the nucleus. In terms of biological role, may be involved in cell wall organization and biogenesis. This is Protein ECM5 (ECM5) from Saccharomyces cerevisiae (strain ATCC 204508 / S288c) (Baker's yeast).